The sequence spans 783 residues: Protein DWD HYPERSENSITIVE TO UV-B 1 (783 aa).

WD repeat units lie at residues 145 to 198 (GEFT…LKLP) and 212 to 256 (SDSS…DPSL). The short motif at 382-389 (RKKESVVR) is the Nuclear localization signal element. WD repeat units follow at residues 439-480 (DNSR…IFRY), 485-525 (GSQS…STVT), 538-577 (DEFD…RLQV), 581-621 (MHQE…SRPC), 625-664 (SSTK…LHLN), and 666-710 (EIVP…RRLR).

As to quaternary structure, interacts directly with DDB1A. Binds to COP1 and RUP1.

The protein resides in the nucleus. May act as a substrate receptor of a CUL4-RING E3 ubiquitin-protein ligase (CRL4) complex involved in the negative regulation of cellular responses to ultraviolet-B (UV-B) illumination, likely in coordination with RUP1. Interacts with COP1 and probably prevents the formation of active UVR8-COP1 complex, thus avoiding UVR8-COP1-mediated positive regulation of UV-B responses. This Arabidopsis thaliana (Mouse-ear cress) protein is Protein DWD HYPERSENSITIVE TO UV-B 1.